Here is a 379-residue protein sequence, read N- to C-terminus: Succinate--CoA ligase [ADP-forming] subunit beta (379 aa).

The 229-residue stretch at 9-237 folds into the ATP-grasp domain; sequence RDILARYGIP…SSDEPEAEQR (229 aa). Residues Lys-45, 52–54, Ile-94, and Glu-99 each bind ATP; that span reads GRG. Asn-192 and Asp-206 together coordinate Mg(2+). Residues Asn-257 and 314 to 316 each bind substrate; that span reads GIT.

Belongs to the succinate/malate CoA ligase beta subunit family. In terms of assembly, heterotetramer of two alpha and two beta subunits. Mg(2+) serves as cofactor.

It carries out the reaction succinate + ATP + CoA = succinyl-CoA + ADP + phosphate. The enzyme catalyses GTP + succinate + CoA = succinyl-CoA + GDP + phosphate. Its pathway is carbohydrate metabolism; tricarboxylic acid cycle; succinate from succinyl-CoA (ligase route): step 1/1. Succinyl-CoA synthetase functions in the citric acid cycle (TCA), coupling the hydrolysis of succinyl-CoA to the synthesis of either ATP or GTP and thus represents the only step of substrate-level phosphorylation in the TCA. The beta subunit provides nucleotide specificity of the enzyme and binds the substrate succinate, while the binding sites for coenzyme A and phosphate are found in the alpha subunit. This is Succinate--CoA ligase [ADP-forming] subunit beta from Roseiflexus sp. (strain RS-1).